Reading from the N-terminus, the 763-residue chain is MAP7 domain-containing protein 2 (763 aa).

The segment covering 1 to 11 (MERGGGGGFGT) has biased composition (gly residues). Disordered stretches follow at residues 1 to 63 (MERG…KERR), 96 to 124 (WRKL…LREE), 149 to 268 (SWGA…DVGK), and 300 to 540 (PLRR…KQKE). Basic and acidic residues predominate over residues 52-63 (SGERQRLAKERR). A coiled-coil region spans residues 54–147 (ERQRLAKERR…RTQQLELKKK (94 aa)). Residues 192 to 206 (ESTNACDKLSTSTMS) are compositionally biased toward polar residues. Composition is skewed to basic and acidic residues over residues 355 to 371 (MPKR…EREG), 385 to 400 (ALEK…EKHA), and 430 to 540 (LAEK…KQKE).

Belongs to the MAP7 family. In terms of assembly, interacts (via N-terminus) with microtubules; facilitates microtubule stabilization. Interacts with kinesin-1 family members, KIF5A, KIF5B and KIF5C.

It is found in the cytoplasm. It localises to the cytoskeleton. The protein localises to the microtubule organizing center. The protein resides in the centrosome. Its subcellular location is the midbody. It is found in the cell projection. It localises to the neuron projection. The protein localises to the axon. Its function is as follows. Microtubule-stabilizing protein involved in the control of cell motility and neurite outgrowth. Acts as a critical cofactor for kinesin transport; in the proximal axon regulates kinesin-1 family members, KIF5A, KIF5B and KIF5C recruitment to microtubules and contributes to kinesin-1-mediated transport in the axons. The chain is MAP7 domain-containing protein 2 (MAP7D2) from Pongo abelii (Sumatran orangutan).